A 24-amino-acid chain; its full sequence is Xenoposin-precursor fragment B1 (24 aa).

Expressed by the skin glands.

The protein resides in the secreted. In terms of biological role, has antibacterial activity. This is Xenoposin-precursor fragment B1 from Xenopus borealis (Kenyan clawed frog).